Consider the following 127-residue polypeptide: UPF0102 protein Mmar10_3014 (127 aa).

It belongs to the UPF0102 family.

The protein is UPF0102 protein Mmar10_3014 of Maricaulis maris (strain MCS10) (Caulobacter maris).